Reading from the N-terminus, the 337-residue chain is ERI1 exoribonuclease 3 (337 aa).

The region spanning 146–320 is the Exonuclease domain; that stretch reads FLVLDFEATC…DDCKNIANIM (175 aa). Positions 150, 152, and 249 each coordinate Mg(2+). The Proton acceptor role is filled by glutamate 152. Glutamate 152 lines the AMP pocket. Histidine 307 serves as the catalytic Proton acceptor. An AMP-binding site is contributed by histidine 307. A Mg(2+)-binding site is contributed by aspartate 312.

Interacts with PRNP. It depends on Mg(2+) as a cofactor.

The protein is ERI1 exoribonuclease 3 (ERI3) of Bos taurus (Bovine).